A 664-amino-acid polypeptide reads, in one-letter code: Macoilin (664 aa).

A run of 4 helical transmembrane segments spans residues 28–48 (TFLY…DFVL), 75–95 (AFSV…LLFI), 120–140 (VCLP…AIRF), and 154–174 (FAAH…KSYV). The segment covering 252–265 (YREKGKEKDKDAKK) has biased composition (basic and acidic residues). The disordered stretch occupies residues 252 to 274 (YREKGKEKDKDAKKHNLGINNNN). Phosphoserine is present on Ser-305. The span at 320 to 348 (KNYKNASGVVNSSPRSHSATNGSIPSSSS) shows a compositional bias: polar residues. A disordered region spans residues 320-375 (KNYKNASGVVNSSPRSHSATNGSIPSSSSKNEKKQRCTSKGPSAHKDLMENCIPNN). An N-linked (GlcNAc...) asparagine glycan is attached at Asn-324. The residue at position 332 (Ser-332) is a Phosphoserine. N-linked (GlcNAc...) asparagine glycans are attached at residues Asn-340 and Asn-452. A disordered region spans residues 630–664 (TSPLSPVSPHYSSKFVETSPSGLDPNASVYQPLKK). Ser-631 and Ser-634 each carry phosphoserine. The N-linked (GlcNAc...) asparagine glycan is linked to Asn-655.

The protein belongs to the macoilin family.

It localises to the rough endoplasmic reticulum membrane. The protein localises to the nucleus membrane. In terms of biological role, plays a role in the regulation of neuronal activity. This chain is Macoilin, found in Rattus norvegicus (Rat).